The chain runs to 452 residues: FAD-linked oxidoreductase DDB_G0289697 (452 aa).

The FAD-binding PCMH-type domain maps to 44–212 (VVNTPLLIVY…TDFTFKLHPV (169 aa)). His81 is subject to Pros-8alpha-FAD histidine.

This sequence belongs to the oxygen-dependent FAD-linked oxidoreductase family. Requires FAD as cofactor.

This Dictyostelium discoideum (Social amoeba) protein is FAD-linked oxidoreductase DDB_G0289697.